The primary structure comprises 185 residues: MSKEIIAKAQERMNQSHQSLAREFSHIRAGRANASLLDRISVEYYGSPTPLNQLAGITVPEARVLLITPFDKSILKDIERALNASDLGLTPQSDGTVIRLVIPALTEETRKNLAKDVKKVGENSKVAIRNIRRDAMDEAKKAEKAKEITEDELKTLEKDIQKVTDDAIKTIDKMTADKEKELLEV.

The protein belongs to the RRF family.

The protein localises to the cytoplasm. In terms of biological role, responsible for the release of ribosomes from messenger RNA at the termination of protein biosynthesis. May increase the efficiency of translation by recycling ribosomes from one round of translation to another. In Streptococcus suis (strain 98HAH33), this protein is Ribosome-recycling factor.